Here is a 259-residue protein sequence, read N- to C-terminus: tRNA (guanine-N(7)-)-methyltransferase (259 aa).

The interval 1-36 (MTFPSHNPPETGHPSAAPDEALPAAEAPVPGDPEAR) is disordered. Residues 14–29 (PSAAPDEALPAAEAPV) show a composition bias toward low complexity. Residues E91, E116, D143, and D166 each contribute to the S-adenosyl-L-methionine site. D166 is an active-site residue. Residues K170, D202, and 237-240 (TKFE) each bind substrate.

Belongs to the class I-like SAM-binding methyltransferase superfamily. TrmB family.

It carries out the reaction guanosine(46) in tRNA + S-adenosyl-L-methionine = N(7)-methylguanosine(46) in tRNA + S-adenosyl-L-homocysteine. The protein operates within tRNA modification; N(7)-methylguanine-tRNA biosynthesis. Functionally, catalyzes the formation of N(7)-methylguanine at position 46 (m7G46) in tRNA. The chain is tRNA (guanine-N(7)-)-methyltransferase from Aromatoleum aromaticum (strain DSM 19018 / LMG 30748 / EbN1) (Azoarcus sp. (strain EbN1)).